Here is a 243-residue protein sequence, read N- to C-terminus: DNA repair protein RecO (243 aa).

It belongs to the RecO family.

In terms of biological role, involved in DNA repair and RecF pathway recombination. This is DNA repair protein RecO from Thermobifida fusca (strain YX).